We begin with the raw amino-acid sequence, 456 residues long: Methylenetetrahydrofolate--tRNA-(uracil-5-)-methyltransferase TrmFO (456 aa).

12-17 (GGGLAG) is a binding site for FAD.

It belongs to the MnmG family. TrmFO subfamily. The cofactor is FAD.

It localises to the cytoplasm. The enzyme catalyses uridine(54) in tRNA + (6R)-5,10-methylene-5,6,7,8-tetrahydrofolate + NADH + H(+) = 5-methyluridine(54) in tRNA + (6S)-5,6,7,8-tetrahydrofolate + NAD(+). The catalysed reaction is uridine(54) in tRNA + (6R)-5,10-methylene-5,6,7,8-tetrahydrofolate + NADPH + H(+) = 5-methyluridine(54) in tRNA + (6S)-5,6,7,8-tetrahydrofolate + NADP(+). In terms of biological role, catalyzes the folate-dependent formation of 5-methyl-uridine at position 54 (M-5-U54) in all tRNAs. This chain is Methylenetetrahydrofolate--tRNA-(uracil-5-)-methyltransferase TrmFO, found in Picosynechococcus sp. (strain ATCC 27264 / PCC 7002 / PR-6) (Agmenellum quadruplicatum).